The following is a 461-amino-acid chain: Dihydrofolate reductase (461 aa).

Residues 233–447 enclose the DHFR domain; the sequence is DLTMIVAVSS…VEIEFELYGK (215 aa). NADP(+) is bound by residues A239 and 246-252; that span reads GIGKKNS. 260–265 is a binding site for substrate; sequence EMAYFA. 292–294 provides a ligand contact to NADP(+); it reads RSC. R308 is a binding site for substrate. Residues 314–316 and 365–372 contribute to the NADP(+) site; these read TRN and GGSFLYGS.

It belongs to the dihydrofolate reductase family.

It catalyses the reaction (6S)-5,6,7,8-tetrahydrofolate + NADP(+) = 7,8-dihydrofolate + NADPH + H(+). The protein operates within cofactor biosynthesis; tetrahydrofolate biosynthesis; 5,6,7,8-tetrahydrofolate from 7,8-dihydrofolate: step 1/1. Key enzyme in folate metabolism. Catalyzes an essential reaction for de novo glycine and purine synthesis, and for DNA precursor synthesis. This is Dihydrofolate reductase (dfr1) from Schizosaccharomyces pombe (strain 972 / ATCC 24843) (Fission yeast).